The sequence spans 234 residues: Carboxy-S-adenosyl-L-methionine synthase (234 aa).

Residues Y35, 60–62 (GCS), 109–110 (DI), N124, and R191 contribute to the S-adenosyl-L-methionine site.

It belongs to the class I-like SAM-binding methyltransferase superfamily. Cx-SAM synthase family. Homodimer.

It carries out the reaction prephenate + S-adenosyl-L-methionine = carboxy-S-adenosyl-L-methionine + 3-phenylpyruvate + H2O. In terms of biological role, catalyzes the conversion of S-adenosyl-L-methionine (SAM) to carboxy-S-adenosyl-L-methionine (Cx-SAM). The polypeptide is Carboxy-S-adenosyl-L-methionine synthase (Campylobacter fetus subsp. fetus (strain 82-40)).